A 341-amino-acid polypeptide reads, in one-letter code: 5-formaminoimidazole-4-carboxamide-1-(beta)-D-ribofuranosyl 5'-monophosphate synthetase (341 aa).

The 5-amino-1-(5-phospho-beta-D-ribosyl)imidazole-4-carboxamide site is built by H10 and T77. An ATP-grasp domain is found at D106–M317. Residues E132–Y188 and E210 contribute to the ATP site. N238 is a binding site for 5-amino-1-(5-phospho-beta-D-ribosyl)imidazole-4-carboxamide. E277 and E290 together coordinate Mg(2+).

This sequence belongs to the phosphohexose mutase family. The cofactor is Mg(2+). Mn(2+) serves as cofactor.

The catalysed reaction is 5-amino-1-(5-phospho-beta-D-ribosyl)imidazole-4-carboxamide + formate + ATP = 5-formamido-1-(5-phospho-D-ribosyl)imidazole-4-carboxamide + ADP + phosphate. Its pathway is purine metabolism; IMP biosynthesis via de novo pathway; 5-formamido-1-(5-phospho-D-ribosyl)imidazole-4-carboxamide from 5-amino-1-(5-phospho-D-ribosyl)imidazole-4-carboxamide (formate route): step 1/1. Functionally, catalyzes the ATP- and formate-dependent formylation of 5-aminoimidazole-4-carboxamide-1-beta-d-ribofuranosyl 5'-monophosphate (AICAR) to 5-formaminoimidazole-4-carboxamide-1-beta-d-ribofuranosyl 5'-monophosphate (FAICAR) in the absence of folates. This chain is 5-formaminoimidazole-4-carboxamide-1-(beta)-D-ribofuranosyl 5'-monophosphate synthetase, found in Nitrosopumilus maritimus (strain SCM1).